A 101-amino-acid chain; its full sequence is Large ribosomal subunit protein uL24 (101 aa).

Belongs to the universal ribosomal protein uL24 family. Part of the 50S ribosomal subunit.

Its function is as follows. One of two assembly initiator proteins, it binds directly to the 5'-end of the 23S rRNA, where it nucleates assembly of the 50S subunit. Functionally, one of the proteins that surrounds the polypeptide exit tunnel on the outside of the subunit. In Paracoccus denitrificans (strain Pd 1222), this protein is Large ribosomal subunit protein uL24.